The following is a 511-amino-acid chain: 2-isopropylmalate synthase (511 aa).

A Pyruvate carboxyltransferase domain is found at 5–267 (LIVFDTTLRD…DTNVDISQIV (263 aa)). Residues D14, H202, H204, and N238 each coordinate Mn(2+). A regulatory domain region spans residues 393-511 (KLSWLKVVSE…YPVERAYPQV (119 aa)).

It belongs to the alpha-IPM synthase/homocitrate synthase family. LeuA type 1 subfamily. In terms of assembly, homodimer. Mn(2+) serves as cofactor.

Its subcellular location is the cytoplasm. It carries out the reaction 3-methyl-2-oxobutanoate + acetyl-CoA + H2O = (2S)-2-isopropylmalate + CoA + H(+). Its pathway is amino-acid biosynthesis; L-leucine biosynthesis; L-leucine from 3-methyl-2-oxobutanoate: step 1/4. Its function is as follows. Catalyzes the condensation of the acetyl group of acetyl-CoA with 3-methyl-2-oxobutanoate (2-ketoisovalerate) to form 3-carboxy-3-hydroxy-4-methylpentanoate (2-isopropylmalate). The chain is 2-isopropylmalate synthase from Nitrosococcus oceani (strain ATCC 19707 / BCRC 17464 / JCM 30415 / NCIMB 11848 / C-107).